The following is a 160-amino-acid chain: Nucleotide-binding protein VS_1405 (160 aa).

This sequence belongs to the YajQ family.

Nucleotide-binding protein. The protein is Nucleotide-binding protein VS_1405 of Vibrio atlanticus (strain LGP32) (Vibrio splendidus (strain Mel32)).